We begin with the raw amino-acid sequence, 60 residues long: Large ribosomal subunit protein uL30 (60 aa).

It belongs to the universal ribosomal protein uL30 family. As to quaternary structure, part of the 50S ribosomal subunit.

The polypeptide is Large ribosomal subunit protein uL30 (Lysinibacillus sphaericus (strain C3-41)).